A 332-amino-acid polypeptide reads, in one-letter code: Holliday junction branch migration complex subunit RuvB (332 aa).

Residues 1–181 are large ATPase domain (RuvB-L); it reads MSRILDNEIM…FGITGHMEYY (181 aa). ATP-binding positions include leucine 20, arginine 21, glycine 62, lysine 65, threonine 66, threonine 67, 128-130, arginine 171, tyrosine 181, and arginine 218; that span reads EDF. Threonine 66 contributes to the Mg(2+) binding site. A small ATPAse domain (RuvB-S) region spans residues 182–252; the sequence is AHAGLTEIVE…ITDKALTMLD (71 aa). Residues 255–332 form a head domain (RuvB-H) region; that stretch reads HEGLDYVDQK…EHLGYEYSEK (78 aa). Residues arginine 291, arginine 310, arginine 312, and arginine 315 each contribute to the DNA site.

It belongs to the RuvB family. As to quaternary structure, homohexamer. Forms an RuvA(8)-RuvB(12)-Holliday junction (HJ) complex. HJ DNA is sandwiched between 2 RuvA tetramers; dsDNA enters through RuvA and exits via RuvB. An RuvB hexamer assembles on each DNA strand where it exits the tetramer. Each RuvB hexamer is contacted by two RuvA subunits (via domain III) on 2 adjacent RuvB subunits; this complex drives branch migration. In the full resolvosome a probable DNA-RuvA(4)-RuvB(12)-RuvC(2) complex forms which resolves the HJ.

Its subcellular location is the cytoplasm. The enzyme catalyses ATP + H2O = ADP + phosphate + H(+). The RuvA-RuvB-RuvC complex processes Holliday junction (HJ) DNA during genetic recombination and DNA repair, while the RuvA-RuvB complex plays an important role in the rescue of blocked DNA replication forks via replication fork reversal (RFR). RuvA specifically binds to HJ cruciform DNA, conferring on it an open structure. The RuvB hexamer acts as an ATP-dependent pump, pulling dsDNA into and through the RuvAB complex. RuvB forms 2 homohexamers on either side of HJ DNA bound by 1 or 2 RuvA tetramers; 4 subunits per hexamer contact DNA at a time. Coordinated motions by a converter formed by DNA-disengaged RuvB subunits stimulates ATP hydrolysis and nucleotide exchange. Immobilization of the converter enables RuvB to convert the ATP-contained energy into a lever motion, pulling 2 nucleotides of DNA out of the RuvA tetramer per ATP hydrolyzed, thus driving DNA branch migration. The RuvB motors rotate together with the DNA substrate, which together with the progressing nucleotide cycle form the mechanistic basis for DNA recombination by continuous HJ branch migration. Branch migration allows RuvC to scan DNA until it finds its consensus sequence, where it cleaves and resolves cruciform DNA. This Streptococcus pneumoniae (strain JJA) protein is Holliday junction branch migration complex subunit RuvB.